A 142-amino-acid polypeptide reads, in one-letter code: Large ribosomal subunit protein uL13c (142 aa).

It belongs to the universal ribosomal protein uL13 family. Part of the 50S ribosomal subunit.

It localises to the plastid. The protein localises to the chloroplast. This is Large ribosomal subunit protein uL13c from Porphyra purpurea (Red seaweed).